We begin with the raw amino-acid sequence, 506 residues long: Protein MGF 505-9R (506 aa).

The protein belongs to the asfivirus MGF 505 family.

Functionally, plays a role in virus cell tropism, and may be required for efficient virus replication in macrophages. The sequence is that of Protein MGF 505-9R from African swine fever virus (isolate Tick/South Africa/Pretoriuskop Pr4/1996) (ASFV).